Here is a 712-residue protein sequence, read N- to C-terminus: Lactoperoxidase (712 aa).

An N-terminal signal peptide occupies residues 1–21 (MLVCLHLQVFLASVALFEVAA). The propeptide occupies 22–117 (SDTIAQAAST…TDPSLDLTAL (96 aa)). N-linked (GlcNAc...) (complex) asparagine; alternate glycosylation occurs at N106. N-linked (GlcNAc...) (hybrid) asparagine; alternate glycosylation is present at N106. 4 disulfides stabilise this stretch: C123–C284, C132–C145, C246–C256, and C250–C274. N212 carries N-linked (GlcNAc...) (complex) asparagine; alternate glycosylation. N212 carries an N-linked (GlcNAc...) (hybrid) asparagine; alternate glycan. Heme b is bound at residue D225. Residue H226 is the Proton acceptor of the active site. Residue D227 participates in Ca(2+) binding. 4 residues coordinate Ca(2+): T301, F303, D305, and S307. The residue at position 315 (S315) is a Phosphoserine. N322 carries N-linked (GlcNAc...) (high mannose) asparagine glycosylation. C354 and C365 are disulfide-bonded. An N-linked (GlcNAc...) asparagine glycan is attached at N358. Heme b is bound at residue E375. Residue N449 is glycosylated (N-linked (GlcNAc...) (complex) asparagine; alternate). An N-linked (GlcNAc...) (hybrid) asparagine; alternate glycan is attached at N449. An N-linked (GlcNAc...) (high mannose) asparagine; alternate glycan is attached at N449. Residue H468 coordinates heme b. Residue Y482 is modified to 3'-nitrotyrosine. 2 cysteine pairs are disulfide-bonded: C573-C630 and C671-C696.

The protein belongs to the peroxidase family. XPO subfamily. Requires Ca(2+) as cofactor. Heme b serves as cofactor. Mammary gland; milk.

The protein localises to the secreted. Its subcellular location is the cytoplasm. The enzyme catalyses 2 a phenolic donor + H2O2 = 2 a phenolic radical donor + 2 H2O. The catalysed reaction is thiocyanate + H2O2 + H(+) = hypothiocyanous acid + H2O. It catalyses the reaction iodide + H2O2 = hypoiodite + H2O. With respect to regulation, inhibited by small molecule methimazole (MMZ). Its function is as follows. Heme-containing oxidoreductase which catalyzes the conversion of thiocyanate (SCN(-)) into antimicrobial agent hypothiocyanous acid (OSCN(-)) in the presence of hydrogen peroxide (H2O2). Also involved in the conversion of iodide (I(-)) into hypoiodite (IO(-)) in the presence of H2O2. Responsible for the inactivation of a wide range of micro-organisms and hence, important component of defense mechanism. Shows antibacterial properties against several Gram-positive bacteria including some Staphylococcus species and Gram-negative bacteria including E.coli, P.aeruginosa and some Salmonella species. Inhibits the growth of several fungi including A.niger, Trichoderma species, C.cassicola, P.meadii and C.salmonicolor. Does not have anti-fungal activity towards C.albicans and Pythium species. May protect the udder from infection and may promote growth in newborns. May be implicated in airway host defense against infection. May contribute to maintaining an appropriate H2O2 cellular level, therefore protecting cells from H2O2-caused injuries and inflammation. This chain is Lactoperoxidase (LPO), found in Capra hircus (Goat).